The sequence spans 361 residues: tRNA 2-selenouridine synthase (361 aa).

The region spanning 14–137 (LIADTPIIDV…LRQTAIQATI (124 aa)) is the Rhodanese domain. Residue C97 is the S-selanylcysteine intermediate of the active site.

This sequence belongs to the SelU family. Monomer.

It carries out the reaction 5-methylaminomethyl-2-thiouridine(34) in tRNA + selenophosphate + (2E)-geranyl diphosphate + H2O + H(+) = 5-methylaminomethyl-2-selenouridine(34) in tRNA + (2E)-thiogeraniol + phosphate + diphosphate. The enzyme catalyses 5-methylaminomethyl-2-thiouridine(34) in tRNA + (2E)-geranyl diphosphate = 5-methylaminomethyl-S-(2E)-geranyl-thiouridine(34) in tRNA + diphosphate. The catalysed reaction is 5-methylaminomethyl-S-(2E)-geranyl-thiouridine(34) in tRNA + selenophosphate + H(+) = 5-methylaminomethyl-2-(Se-phospho)selenouridine(34) in tRNA + (2E)-thiogeraniol. It catalyses the reaction 5-methylaminomethyl-2-(Se-phospho)selenouridine(34) in tRNA + H2O = 5-methylaminomethyl-2-selenouridine(34) in tRNA + phosphate. Involved in the post-transcriptional modification of the uridine at the wobble position (U34) of tRNA(Lys), tRNA(Glu) and tRNA(Gln). Catalyzes the conversion of 2-thiouridine (S2U-RNA) to 2-selenouridine (Se2U-RNA). Acts in a two-step process involving geranylation of 2-thiouridine (S2U) to S-geranyl-2-thiouridine (geS2U) and subsequent selenation of the latter derivative to 2-selenouridine (Se2U) in the tRNA chain. The sequence is that of tRNA 2-selenouridine synthase from Escherichia coli O6:H1 (strain CFT073 / ATCC 700928 / UPEC).